The chain runs to 574 residues: Proline--tRNA ligase (574 aa).

The protein belongs to the class-II aminoacyl-tRNA synthetase family. ProS type 1 subfamily. Homodimer.

It localises to the cytoplasm. It carries out the reaction tRNA(Pro) + L-proline + ATP = L-prolyl-tRNA(Pro) + AMP + diphosphate. Catalyzes the attachment of proline to tRNA(Pro) in a two-step reaction: proline is first activated by ATP to form Pro-AMP and then transferred to the acceptor end of tRNA(Pro). As ProRS can inadvertently accommodate and process non-cognate amino acids such as alanine and cysteine, to avoid such errors it has two additional distinct editing activities against alanine. One activity is designated as 'pretransfer' editing and involves the tRNA(Pro)-independent hydrolysis of activated Ala-AMP. The other activity is designated 'posttransfer' editing and involves deacylation of mischarged Ala-tRNA(Pro). The misacylated Cys-tRNA(Pro) is not edited by ProRS. The sequence is that of Proline--tRNA ligase from Aeromonas hydrophila subsp. hydrophila (strain ATCC 7966 / DSM 30187 / BCRC 13018 / CCUG 14551 / JCM 1027 / KCTC 2358 / NCIMB 9240 / NCTC 8049).